A 574-amino-acid chain; its full sequence is uncharacterized protein (574 aa).

The tract at residues 297 to 327 (STASKSKKRRKDEVSGAQRNSSPLPQDAVSS) is disordered. The segment covering 313 to 327 (AQRNSSPLPQDAVSS) has biased composition (polar residues).

This is an uncharacterized protein from Macaca fascicularis (Crab-eating macaque).